We begin with the raw amino-acid sequence, 255 residues long: Reticulon-like protein B3 (255 aa).

Positions 1–25 (MAEEHKHEESIMEKISEKIHGHDDS) are enriched in basic and acidic residues. Residues 1-38 (MAEEHKHEESIMEKISEKIHGHDDSSSSSSDSDDDKNS) are disordered. At A2 the chain carries N-acetylalanine. Positions 64–255 (PADIFLWRNK…GAFAFIKKKD (192 aa)) constitute a Reticulon domain. The next 3 helical transmembrane spans lie at 75-95 (VSGG…LLEY), 97-117 (LLTL…LWSS), and 186-206 (CNFL…PVLY).

The protein localises to the endoplasmic reticulum membrane. The protein resides in the vacuole membrane. This is Reticulon-like protein B3 (RTNLB3) from Arabidopsis thaliana (Mouse-ear cress).